The primary structure comprises 216 residues: Squamosa promoter-binding-like protein 13 (216 aa).

A disordered region spans residues 32–110 (GDGGAALPSP…PSGGGGGPRC (79 aa)). Low complexity predominate over residues 67–91 (SSSAAVAAGASSSSSSSSVAAAARR). Positions 94–108 (GRAGGGAPSGGGGGP) are enriched in gly residues. The segment at 107 to 184 (GPRCQVERCG…AGHNERRRKS (78 aa)) adopts an SBP-type zinc-finger fold. Residues C110, C115, C132, H135, C151, C154, H158, and C170 each coordinate Zn(2+). A Bipartite nuclear localization signal motif is present at residues 167–183 (KRSCRRRLAGHNERRRK). The interval 175–216 (AGHNERRRKSAADTAHGENCRHADQDAGRSHQGTGNPPFQIR) is disordered. Over residues 189-203 (AHGENCRHADQDAGR) the composition is skewed to basic and acidic residues. Positions 205–216 (HQGTGNPPFQIR) are enriched in polar residues.

In terms of tissue distribution, ubiquitous.

It localises to the nucleus. In terms of biological role, trans-acting factor that binds specifically to the consensus nucleotide sequence 5'-TNCGTACAA-3'. May be involved in panicle development. In Oryza sativa subsp. japonica (Rice), this protein is Squamosa promoter-binding-like protein 13 (SPL13).